Here is a 120-residue protein sequence, read N- to C-terminus: Large ribosomal subunit protein uL18 (120 aa).

Belongs to the universal ribosomal protein uL18 family. In terms of assembly, part of the 50S ribosomal subunit; part of the 5S rRNA/L5/L18/L25 subcomplex. Contacts the 5S and 23S rRNAs.

Its function is as follows. This is one of the proteins that bind and probably mediate the attachment of the 5S RNA into the large ribosomal subunit, where it forms part of the central protuberance. This chain is Large ribosomal subunit protein uL18, found in Bradyrhizobium sp. (strain BTAi1 / ATCC BAA-1182).